The primary structure comprises 645 residues: Acetyl-coenzyme A synthetase (645 aa).

CoA contacts are provided by residues 190–193 (RGGR) and threonine 309. ATP contacts are provided by residues 385–387 (GEP), 409–414 (DTWWQT), aspartate 498, and arginine 513. Serine 521 provides a ligand contact to CoA. Arginine 524 is a binding site for ATP. 3 residues coordinate Mg(2+): valine 535, histidine 537, and valine 540. CoA is bound at residue arginine 582. An N6-acetyllysine modification is found at lysine 607.

The protein belongs to the ATP-dependent AMP-binding enzyme family. Mg(2+) serves as cofactor. Post-translationally, acetylated. Deacetylation by the SIR2-homolog deacetylase activates the enzyme.

It carries out the reaction acetate + ATP + CoA = acetyl-CoA + AMP + diphosphate. In terms of biological role, catalyzes the conversion of acetate into acetyl-CoA (AcCoA), an essential intermediate at the junction of anabolic and catabolic pathways. AcsA undergoes a two-step reaction. In the first half reaction, AcsA combines acetate with ATP to form acetyl-adenylate (AcAMP) intermediate. In the second half reaction, it can then transfer the acetyl group from AcAMP to the sulfhydryl group of CoA, forming the product AcCoA. This is Acetyl-coenzyme A synthetase from Methylocella silvestris (strain DSM 15510 / CIP 108128 / LMG 27833 / NCIMB 13906 / BL2).